The primary structure comprises 131 residues: MPNSSSSKVPSIKAQHRIAKKRAVRRRRIDLDCGCSIYIHINCAKDGNGFTHMGRHHCASGREFRFYLGGSKSPLFQDVQXGGSTLHAHKDIPHTNPVQPQPEESTKSSQSVPELPSLDGIDSSFWDDIFE.

Positions 13–28 (KAQHRIAKKRAVRRRR) match the Nuclear localization signal motif. A zinc finger spans residues 33 to 52 (CGCSIYIHINCAKDGNGFTH). Positions 78–131 (DVQXGGSTLHAHKDIPHTNPVQPQPEESTKSSQSVPELPSLDGIDSSFWDDIFE) are disordered. Residues 117-131 (SLDGIDSSFWDDIFE) form a transactivation region.

The protein belongs to the geminiviridae transcriptional activator protein family. As to quaternary structure, monomer. Homodimer. Homooligomer. Self-interaction correlates with nuclear localization and efficient activation of transcription. Monomers suppress local silencing by interacting with and inactivating host adenosine kinase 2 (ADK2) in the cytoplasm. Interacts with and inhibits host SNF1 kinase. Binds to ssDNA. Post-translationally, phosphorylated.

The protein resides in the host nucleus. It is found in the host cytoplasm. Functionally, strong activator of the late viral genes promoters. Enhances the expression of the capsid protein and nuclear shuttle protein. Acts as a suppressor of RNA-mediated gene silencing, also known as post-transcriptional gene silencing (PTGS), a mechanism of plant viral defense that limits the accumulation of viral RNAs. Suppresses the host RNA silencing by inhibiting adenosine kinase 2 (ADK2), a kinase involved in a general methylation pathway. Also suppresses the host basal defense by interacting with and inhibiting SNF1 kinase, a key regulator of cell metabolism implicated in innate antiviral defense. Determines pathogenicity. The polypeptide is Transcriptional activator protein (Cucurbita moschata (Winter crookneck squash)).